Consider the following 194-residue polypeptide: Peptidyl-tRNA hydrolase (194 aa).

Tyr-16 is a binding site for tRNA. The active-site Proton acceptor is His-21. 3 residues coordinate tRNA: Phe-67, Asn-69, and Asn-115.

The protein belongs to the PTH family. In terms of assembly, monomer.

It localises to the cytoplasm. It catalyses the reaction an N-acyl-L-alpha-aminoacyl-tRNA + H2O = an N-acyl-L-amino acid + a tRNA + H(+). In terms of biological role, hydrolyzes ribosome-free peptidyl-tRNAs (with 1 or more amino acids incorporated), which drop off the ribosome during protein synthesis, or as a result of ribosome stalling. Functionally, catalyzes the release of premature peptidyl moieties from peptidyl-tRNA molecules trapped in stalled 50S ribosomal subunits, and thus maintains levels of free tRNAs and 50S ribosomes. The sequence is that of Peptidyl-tRNA hydrolase from Shigella boydii serotype 4 (strain Sb227).